A 253-amino-acid polypeptide reads, in one-letter code: tRNA (guanine-N(1)-)-methyltransferase (253 aa).

Residues glycine 110 and 130–135 (IGDYIL) contribute to the S-adenosyl-L-methionine site.

Belongs to the RNA methyltransferase TrmD family. As to quaternary structure, homodimer.

The protein resides in the cytoplasm. The catalysed reaction is guanosine(37) in tRNA + S-adenosyl-L-methionine = N(1)-methylguanosine(37) in tRNA + S-adenosyl-L-homocysteine + H(+). In terms of biological role, specifically methylates guanosine-37 in various tRNAs. The chain is tRNA (guanine-N(1)-)-methyltransferase from Carboxydothermus hydrogenoformans (strain ATCC BAA-161 / DSM 6008 / Z-2901).